The following is a 195-amino-acid chain: Ethylene-responsive transcription factor ERF018 (195 aa).

Basic and acidic residues predominate over residues 1 to 13; that stretch reads MVKQAMKEEEKKR. The segment at 1-22 is disordered; it reads MVKQAMKEEEKKRNTAMQSKYK. Residues 20–77 constitute a DNA-binding region (AP2/ERF); that stretch reads KYKGVRKRKWGKWVSEIRLPHSRERIWLGSYDTPEKAARAFDAAQFCLRGGDANFNFP.

This sequence belongs to the AP2/ERF transcription factor family. ERF subfamily.

The protein localises to the nucleus. Probably acts as a transcriptional activator. Binds to the GCC-box pathogenesis-related promoter element. May be involved in the regulation of gene expression by stress factors and by components of stress signal transduction pathways. In Arabidopsis thaliana (Mouse-ear cress), this protein is Ethylene-responsive transcription factor ERF018 (ERF018).